We begin with the raw amino-acid sequence, 180 residues long: Large ribosomal subunit protein uL6 (180 aa).

Belongs to the universal ribosomal protein uL6 family. Part of the 50S ribosomal subunit.

In terms of biological role, this protein binds to the 23S rRNA, and is important in its secondary structure. It is located near the subunit interface in the base of the L7/L12 stalk, and near the tRNA binding site of the peptidyltransferase center. This Borrelia recurrentis (strain A1) protein is Large ribosomal subunit protein uL6.